Reading from the N-terminus, the 1280-residue chain is Fibronectin type III domain-containing protein (1280 aa).

An N-terminal signal peptide occupies residues 1–19 (MWQILLAISIFSLSKLSNA). Residues 20 to 1156 (QQQPKVAPPQ…RVSTPIYQSA (1137 aa)) lie on the Extracellular side of the membrane. Intrachain disulfides connect Cys-58/Cys-111, Cys-268/Cys-321, Cys-369/Cys-417, Cys-460/Cys-511, and Cys-553/Cys-604. 5 Fibronectin type-III domains span residues 628 to 722 (PFPP…TGSF), 730 to 824 (PEKW…VKQF), 830 to 933 (PTGK…VAAD), 939 to 1033 (PGPP…TEKT), and 1039 to 1131 (PAKP…PASD). Positions 1118-1130 (YPSQENPQESPAS) are enriched in polar residues. A disordered region spans residues 1118–1144 (YPSQENPQESPASDITEARPRPGISNV). Residues 1157-1177 (WFIALLVLIALLLLVLLTFVL) traverse the membrane as a helical segment. Residues 1178-1280 (YTRHQGAKYL…KDPSSLATFV (103 aa)) are Cytoplasmic-facing. Positions 1206–1280 (DEEEGSFSNN…KDPSSLATFV (75 aa)) are disordered. The segment covering 1262 to 1273 (DEKKAPPEEKDP) has biased composition (basic and acidic residues).

In terms of tissue distribution, component of the acid-insoluble organic matrix of the aragonitic skeleton (at protein level).

It is found in the membrane. The chain is Fibronectin type III domain-containing protein from Acropora millepora (Staghorn coral).